Here is a 210-residue protein sequence, read N- to C-terminus: Putative cutinase (210 aa).

Residues aspartate 26–glycine 38 are compositionally biased toward basic and acidic residues. The interval aspartate 26 to alanine 58 is disordered. Over residues serine 49–alanine 58 the composition is skewed to low complexity.

It catalyses the reaction cutin + H2O = cutin monomers.. This chain is Putative cutinase, found in Phytophthora capsici.